The primary structure comprises 53 residues: uncharacterized protein (53 aa).

The helical transmembrane segment at 28 to 45 (AIVFSLAVFGIVEAYYYW) threads the bilayer.

It localises to the host membrane. This is an uncharacterized protein from Acidianus convivator (ABV).